We begin with the raw amino-acid sequence, 350 residues long: Probable dual-specificity RNA methyltransferase RlmN (350 aa).

Glutamate 98 (proton acceptor) is an active-site residue. The region spanning 104–334 is the Radical SAM core domain; it reads HTYGNSVCVS…VTVRRELGGD (231 aa). Cysteine 111 and cysteine 339 are joined by a disulfide. [4Fe-4S] cluster is bound by residues cysteine 118, cysteine 122, and cysteine 125. Residues 165–166, serine 197, 220–222, and asparagine 296 contribute to the S-adenosyl-L-methionine site; these read GE and SLH. Catalysis depends on cysteine 339, which acts as the S-methylcysteine intermediate.

The protein belongs to the radical SAM superfamily. RlmN family. [4Fe-4S] cluster is required as a cofactor.

The protein localises to the cytoplasm. It catalyses the reaction adenosine(2503) in 23S rRNA + 2 reduced [2Fe-2S]-[ferredoxin] + 2 S-adenosyl-L-methionine = 2-methyladenosine(2503) in 23S rRNA + 5'-deoxyadenosine + L-methionine + 2 oxidized [2Fe-2S]-[ferredoxin] + S-adenosyl-L-homocysteine. The enzyme catalyses adenosine(37) in tRNA + 2 reduced [2Fe-2S]-[ferredoxin] + 2 S-adenosyl-L-methionine = 2-methyladenosine(37) in tRNA + 5'-deoxyadenosine + L-methionine + 2 oxidized [2Fe-2S]-[ferredoxin] + S-adenosyl-L-homocysteine. Functionally, specifically methylates position 2 of adenine 2503 in 23S rRNA and position 2 of adenine 37 in tRNAs. In Desulforamulus reducens (strain ATCC BAA-1160 / DSM 100696 / MI-1) (Desulfotomaculum reducens), this protein is Probable dual-specificity RNA methyltransferase RlmN.